The chain runs to 462 residues: BPI fold-containing family B member 2 (462 aa).

Residues 1–22 form the signal peptide; that stretch reads MARACSLGLLLLLLLLLRTVVT. T55 bears the Phosphothreonine mark. S63 carries the post-translational modification Phosphoserine. N-linked (GlcNAc...) asparagine glycosylation occurs at N99. A disulfide bridge connects residues C140 and C177. 2 N-linked (GlcNAc...) asparagine glycosylation sites follow: N297 and N336.

Belongs to the BPI/LBP/Plunc superfamily. BPI/LBP family.

Its subcellular location is the secreted. This Mus musculus (Mouse) protein is BPI fold-containing family B member 2 (Bpifb2).